A 90-amino-acid polypeptide reads, in one-letter code: UPF0223 protein SH1855 (90 aa).

It belongs to the UPF0223 family.

The polypeptide is UPF0223 protein SH1855 (Staphylococcus haemolyticus (strain JCSC1435)).